Reading from the N-terminus, the 336-residue chain is Plant-specific TFIIB-related protein 2 (336 aa).

The TFIIB-type zinc finger occupies E2–E34. Zn(2+) contacts are provided by C6, C9, C26, and C29.

As to expression, specifically expressed in reproductive organs and seeds.

The protein localises to the nucleus. In terms of biological role, plant-specific TFIIB-related protein involved in the regulation of endosperm proliferation during the syncytial phase of endosperm development. Does not contribute to RNA polymerase IV or V activities in reproductive tissues. In Arabidopsis thaliana (Mouse-ear cress), this protein is Plant-specific TFIIB-related protein 2.